The chain runs to 128 residues: CD59 glycoprotein (128 aa).

Residues 1 to 25 (MGIQGGSVLFGLLLILAVFCHSGHS) form the signal peptide. Positions 26-108 (LQCYSCPYST…ILENGGTTLS (83 aa)) constitute a UPAR/Ly6 domain. Cystine bridges form between Cys28/Cys51, Cys31/Cys38, Cys44/Cys64, Cys70/Cys88, and Cys89/Cys94. A glycan (N-linked (GlcNAc...) asparagine) is linked at Asn43. Asn102 carries the GPI-anchor amidated asparagine lipid modification. A propeptide spans 103 to 128 (GGTTLSKKTVLLLVTPFLAAAWSLHP) (removed in mature form).

Interacts with T-cell surface antigen CD2. N- and O-glycosylated.

Its subcellular location is the cell membrane. It localises to the secreted. Functionally, potent inhibitor of the complement membrane attack complex (MAC) action, which protects self-cells from damage during complement activation. Acts by binding to the beta-haipins of C8 (C8A and C8B) components of the assembling MAC, forming an intermolecular beta-sheet that prevents incorporation of the multiple copies of C9 required for complete formation of the osmolytic pore. The polypeptide is CD59 glycoprotein (Callithrix sp. (Marmoset)).